Reading from the N-terminus, the 258-residue chain is 14-3-3-like protein 16R (258 aa).

The tract at residues 238–258 (DMQDDGTDEIKEAAPKPDNNE) is disordered. Over residues 245–258 (DEIKEAAPKPDNNE) the composition is skewed to basic and acidic residues.

Belongs to the 14-3-3 family.

The chain is 14-3-3-like protein 16R from Solanum tuberosum (Potato).